Reading from the N-terminus, the 164-residue chain is Crossover junction endodeoxyribonuclease RuvC (164 aa).

Residues aspartate 7, glutamate 67, and aspartate 140 contribute to the active site. Mg(2+) contacts are provided by aspartate 7, glutamate 67, and aspartate 140.

This sequence belongs to the RuvC family. Homodimer which binds Holliday junction (HJ) DNA. The HJ becomes 2-fold symmetrical on binding to RuvC with unstacked arms; it has a different conformation from HJ DNA in complex with RuvA. In the full resolvosome a probable DNA-RuvA(4)-RuvB(12)-RuvC(2) complex forms which resolves the HJ. Requires Mg(2+) as cofactor.

It is found in the cytoplasm. The enzyme catalyses Endonucleolytic cleavage at a junction such as a reciprocal single-stranded crossover between two homologous DNA duplexes (Holliday junction).. Its function is as follows. The RuvA-RuvB-RuvC complex processes Holliday junction (HJ) DNA during genetic recombination and DNA repair. Endonuclease that resolves HJ intermediates. Cleaves cruciform DNA by making single-stranded nicks across the HJ at symmetrical positions within the homologous arms, yielding a 5'-phosphate and a 3'-hydroxyl group; requires a central core of homology in the junction. The consensus cleavage sequence is 5'-(A/T)TT(C/G)-3'. Cleavage occurs on the 3'-side of the TT dinucleotide at the point of strand exchange. HJ branch migration catalyzed by RuvA-RuvB allows RuvC to scan DNA until it finds its consensus sequence, where it cleaves and resolves the cruciform DNA. The polypeptide is Crossover junction endodeoxyribonuclease RuvC (Alkaliphilus metalliredigens (strain QYMF)).